A 181-amino-acid chain; its full sequence is Interleukin-10 (181 aa).

The N-terminal stretch at methionine 1–alanine 19 is a signal peptide. 2 disulfide bridges follow: cysteine 31–cysteine 129 and cysteine 81–cysteine 135. An N-linked (GlcNAc...) asparagine glycan is attached at asparagine 137.

The protein belongs to the IL-10 family. In terms of assembly, homodimer. Interacts with IL10RA and IL10RB.

It is found in the secreted. Its function is as follows. Major immune regulatory cytokine that acts on many cells of the immune system where it has profound anti-inflammatory functions, limiting excessive tissue disruption caused by inflammation. Mechanistically, IL10 binds to its heterotetrameric receptor comprising IL10RA and IL10RB leading to JAK1 and STAT2-mediated phosphorylation of STAT3. In turn, STAT3 translocates to the nucleus where it drives expression of anti-inflammatory mediators. Targets antigen-presenting cells (APCs) such as macrophages and monocytes and inhibits their release of pro-inflammatory cytokines including granulocyte-macrophage colony-stimulating factor /GM-CSF, granulocyte colony-stimulating factor/G-CSF, IL-1 alpha, IL-1 beta, IL-6, IL-8 and TNF-alpha. Also interferes with antigen presentation by reducing the expression of MHC-class II and co-stimulatory molecules, thereby inhibiting their ability to induce T cell activation. In addition, controls the inflammatory response of macrophages by reprogramming essential metabolic pathways including mTOR signaling. This Canis lupus familiaris (Dog) protein is Interleukin-10 (IL10).